We begin with the raw amino-acid sequence, 290 residues long: Beta-lactamase OXY-2 (290 aa).

A signal peptide spans 1 to 27 (MIKSSWRKIAMLAAAVPLLLASGALWA). The Acyl-ester intermediate role is filled by S72. 236–238 (KTG) serves as a coordination point for substrate.

The protein belongs to the class-A beta-lactamase family.

It catalyses the reaction a beta-lactam + H2O = a substituted beta-amino acid. In terms of biological role, hydrolyzes broad-spectrum beta-lactam antibiotics. Active against all third-generation cephalosporins but ceftazidime. This chain is Beta-lactamase OXY-2 (bla), found in Klebsiella oxytoca.